Reading from the N-terminus, the 397-residue chain is UDP-GlcNAc:betaGal beta-1,3-N-acetylglucosaminyltransferase 7 (397 aa).

Residues 1–6 (MSLWKK) are Cytoplasmic-facing. A helical; Signal-anchor for type II membrane protein membrane pass occupies residues 7 to 26 (TLYKSVCLALALLVAVTVFQ). At 27–397 (RSVTPGQFLQ…LTCSLKFQVL (371 aa)) the chain is on the lumenal side. N-linked (GlcNAc...) asparagine glycosylation is found at Asn-84, Asn-90, Asn-210, and Asn-387.

The protein belongs to the glycosyltransferase 31 family.

The protein localises to the golgi apparatus membrane. It participates in protein modification; protein glycosylation. Its function is as follows. N-acetyl glucosamine (GlcNAc) transferase that catalyzes the transfer of GlcNAc via a beta1-&gt;3 linkage from UDP-GlcNAc to the non-reducing terminal galactose (Gal) in the linearly growing chain of N- and O-linked keratan sulfate proteoglycans. Cooperates with B4GALT4 galactosyltransferase and CHST6 and CHST1 sulfotransferases to construct and elongate mono- and disulfated disaccharide units [-&gt;3Galbeta1-&gt;4(6-sulfoGlcNAcbeta)1-&gt;] and [-&gt;3(6-sulfoGalbeta)1-&gt;4(6-sulfoGlcNAcbeta)1-&gt;] within keratan sulfate polymer. Involved in biosynthesis of N-linked keratan sulfate proteoglycans in cornea, with an impact on proteoglycan fibril organization and corneal transparency. May play a role in the maintenance of tissue architecture by suppressing cellular motility and invasion. This chain is UDP-GlcNAc:betaGal beta-1,3-N-acetylglucosaminyltransferase 7 (B3gnt7), found in Rattus norvegicus (Rat).